The primary structure comprises 242 residues: Ubiquinone biosynthesis O-methyltransferase (242 aa).

Residues Arg-44, Gly-64, Asp-85, and Met-129 each coordinate S-adenosyl-L-methionine.

It belongs to the methyltransferase superfamily. UbiG/COQ3 family.

The enzyme catalyses a 3-demethylubiquinol + S-adenosyl-L-methionine = a ubiquinol + S-adenosyl-L-homocysteine + H(+). The catalysed reaction is a 3-(all-trans-polyprenyl)benzene-1,2-diol + S-adenosyl-L-methionine = a 2-methoxy-6-(all-trans-polyprenyl)phenol + S-adenosyl-L-homocysteine + H(+). Its pathway is cofactor biosynthesis; ubiquinone biosynthesis. Its function is as follows. O-methyltransferase that catalyzes the 2 O-methylation steps in the ubiquinone biosynthetic pathway. This chain is Ubiquinone biosynthesis O-methyltransferase, found in Salmonella agona (strain SL483).